Reading from the N-terminus, the 78-residue chain is Small ribosomal subunit protein bS18 (78 aa).

Belongs to the bacterial ribosomal protein bS18 family. In terms of assembly, part of the 30S ribosomal subunit. Forms a tight heterodimer with protein bS6.

Functionally, binds as a heterodimer with protein bS6 to the central domain of the 16S rRNA, where it helps stabilize the platform of the 30S subunit. The protein is Small ribosomal subunit protein bS18 of Levilactobacillus brevis (strain ATCC 367 / BCRC 12310 / CIP 105137 / JCM 1170 / LMG 11437 / NCIMB 947 / NCTC 947) (Lactobacillus brevis).